The chain runs to 241 residues: MTFSRPSGRTADQLRPVRIERAFTRHAEGSVLVSFGDTHVLCTASVENRVPNFLRGKGEGWVTAEYGMLPRSTHTRSDREAARGKQGGRTLEIQRLIGRALRACVDRNALGERTITLDCDVLQADGGTRTAAITGAYVALADAVNLLLKRGEIKKHPLIGAVAAVSVGIYRGEPVLDLDYPEDSDCDTDMNVVMNDGGGFIELQGTAEGHAFRRDELNALLALAEKGMGDLFALQRAALAG.

Residues Arg89 and 127–129 (GTR) each bind phosphate.

The protein belongs to the RNase PH family. In terms of assembly, homohexameric ring arranged as a trimer of dimers.

The catalysed reaction is tRNA(n+1) + phosphate = tRNA(n) + a ribonucleoside 5'-diphosphate. Functionally, phosphorolytic 3'-5' exoribonuclease that plays an important role in tRNA 3'-end maturation. Removes nucleotide residues following the 3'-CCA terminus of tRNAs; can also add nucleotides to the ends of RNA molecules by using nucleoside diphosphates as substrates, but this may not be physiologically important. Probably plays a role in initiation of 16S rRNA degradation (leading to ribosome degradation) during starvation. The chain is Ribonuclease PH from Xanthomonas oryzae pv. oryzae (strain MAFF 311018).